We begin with the raw amino-acid sequence, 580 residues long: Proline--tRNA ligase (580 aa).

This sequence belongs to the class-II aminoacyl-tRNA synthetase family. ProS type 1 subfamily. In terms of assembly, homodimer.

It is found in the cytoplasm. The enzyme catalyses tRNA(Pro) + L-proline + ATP = L-prolyl-tRNA(Pro) + AMP + diphosphate. Its function is as follows. Catalyzes the attachment of proline to tRNA(Pro) in a two-step reaction: proline is first activated by ATP to form Pro-AMP and then transferred to the acceptor end of tRNA(Pro). As ProRS can inadvertently accommodate and process non-cognate amino acids such as alanine and cysteine, to avoid such errors it has two additional distinct editing activities against alanine. One activity is designated as 'pretransfer' editing and involves the tRNA(Pro)-independent hydrolysis of activated Ala-AMP. The other activity is designated 'posttransfer' editing and involves deacylation of mischarged Ala-tRNA(Pro). The misacylated Cys-tRNA(Pro) is not edited by ProRS. This Mycobacteroides abscessus (strain ATCC 19977 / DSM 44196 / CCUG 20993 / CIP 104536 / JCM 13569 / NCTC 13031 / TMC 1543 / L948) (Mycobacterium abscessus) protein is Proline--tRNA ligase.